Reading from the N-terminus, the 281-residue chain is Sulfur carrier protein FdhD (281 aa).

Cys127 functions as the Cysteine persulfide intermediate in the catalytic mechanism. Residue 264 to 269 participates in Mo-bis(molybdopterin guanine dinucleotide) binding; that stretch reads FAREGR.

Belongs to the FdhD family.

The protein resides in the cytoplasm. Required for formate dehydrogenase (FDH) activity. Acts as a sulfur carrier protein that transfers sulfur from IscS to the molybdenum cofactor prior to its insertion into FDH. The sequence is that of Sulfur carrier protein FdhD from Mannheimia succiniciproducens (strain KCTC 0769BP / MBEL55E).